We begin with the raw amino-acid sequence, 546 residues long: Chaperonin GroEL 3 (546 aa).

Residues 30 to 33, K51, 87 to 91, G415, and D496 each bind ATP; these read TLGP and DGTTT.

The protein belongs to the chaperonin (HSP60) family. Forms a cylinder of 14 subunits composed of two heptameric rings stacked back-to-back. Interacts with the co-chaperonin GroES.

The protein localises to the cytoplasm. The enzyme catalyses ATP + H2O + a folded polypeptide = ADP + phosphate + an unfolded polypeptide.. Together with its co-chaperonin GroES, plays an essential role in assisting protein folding. The GroEL-GroES system forms a nano-cage that allows encapsulation of the non-native substrate proteins and provides a physical environment optimized to promote and accelerate protein folding. This Bradyrhizobium diazoefficiens (strain JCM 10833 / BCRC 13528 / IAM 13628 / NBRC 14792 / USDA 110) protein is Chaperonin GroEL 3.